Reading from the N-terminus, the 713-residue chain is Polyribonucleotide nucleotidyltransferase (713 aa).

Asp-493 and Asp-499 together coordinate Mg(2+). The 60-residue stretch at 560 to 619 (PRMITIKINPEKIRDVIGKGGSVIRALTEETGTTIDISDDGVVTIASTNSEGMAEAKKRI) folds into the KH domain. An S1 motif domain is found at 629 to 697 (GHVYEGTVLK…EKGRVRLSAK (69 aa)).

This sequence belongs to the polyribonucleotide nucleotidyltransferase family. Requires Mg(2+) as cofactor.

It localises to the cytoplasm. It carries out the reaction RNA(n+1) + phosphate = RNA(n) + a ribonucleoside 5'-diphosphate. Involved in mRNA degradation. Catalyzes the phosphorolysis of single-stranded polyribonucleotides processively in the 3'- to 5'-direction. This Burkholderia mallei (strain NCTC 10247) protein is Polyribonucleotide nucleotidyltransferase.